Reading from the N-terminus, the 1339-residue chain is MRRFFPMAERAKLLFHNEAMDKTAMKQLISRLINHFGMTYTSNISDQLKTSGFQRATDAAISLGIDDLLTAPSKGWLVQDAEQQGSISEKHHHYGNVHAVEKLRQSIETWYATSEYLRQEMNPNFRMTDPFNPVHMMSFSGSRGSTSQVHQLVGMRGLVSDPQGQIVDLPIQSNFREGLSLTEYIISCYGARKGVVDTAVRTSDAGYLTRRLVEVVQHIVVRKTDCGTIQGIFVNLIQGRERIKNRIVLQTLIGRVLADDVYIDMRCIATRNQDIGVGLAHQLITLRAQPIYIRTPSTCKSLSRICRLCYGRSPTHGNLIELGEAVGIIAGQSIGEPGTQLTLRTFHTGGIFTGDIAEHVRAPFNGKIEFDENLVYPTRTRHGHPAFMCHNNLSITLDGQDQVHDLTISPQSLLLVQNNQYVESEQIIAEVHARTSPSKEKVRKHIYSNLEGEMHWSTNVCHAPEYVQGNVHLILRTSHLWVLSGGIHGSSAVSFPFHKDQDQVNVQLPLAKHELLPDYSVNQDRMKHKSVDSNFYGKEEQISSYSEIDRVISNEHWDSIYSTISSDNFNISGKKQRNRFFVPLRYDKERGNKGISRPNLIIKISRNGISQRNDIFAVLDDPRYRINSSGIIKYGTIKVDSIGNKENYLGDQRARGFRSKDKMKGGRFLFIPEEVHILYESSSIMVQNNSIIRAGTQITCDIESQVGGLVRIVRIKKKIEMRILPGDIYFPGEIHGISRHNGTLIPPGKILFDEFQSENWIYLQWIIPPKEKPFVPVRPVVEYGIPDGPDITAPLSLDLLREGDNLQVRVGNFLLYGDGERIQVINDISIQLVRTYLVLDWEQKDSMEEAYAYLTEVRTNGIVRNXLQISLAKYPILYMGKRKNTAGSKSMFHNKLDHANPISSNEESQLLSQHQGTIRALPNEREEGGSLMVLSPSDCSRIVLSKGSKHYDMVNRSIQDDSMMQIIELSGFLGNLHSIANRSPSSHSITYNKYYNISLKEQPIFGNSENTLRVPKWYFMDENTVVSNFGPCRNIISDLFNSNRCFPLSKFCENPFPVVSLGQLIRESVRISEDEPLPGSGQIIAVHEESLVIRLAELYLATRRATVHGHYGEIINEGDTLITLIYERFKSGDIIQGLPKVEQLSEARSINSISMNLEKSFEDWNRDMTRSLGSPWGSFISSKITMEQSRIHLVNQIQRVYRSQGVQISDKHIEIIVRQMTSKVLISGDGMADVFLPGELIELSRAQRMDRALKEATYYRTMLLGATRASLDTQSFISEAGFQETARVLARAALQGRIDWLKGLKENVILGGIVPAGTGFKQSIYHSGERNEIDPRTGK.

4 residues coordinate Zn(2+): C226, C299, C306, and C309.

The protein belongs to the RNA polymerase beta' chain family. RpoC2 subfamily. In plastids the minimal PEP RNA polymerase catalytic core is composed of four subunits: alpha, beta, beta', and beta''. When a (nuclear-encoded) sigma factor is associated with the core the holoenzyme is formed, which can initiate transcription. It depends on Zn(2+) as a cofactor.

The protein resides in the plastid. The protein localises to the chloroplast. The enzyme catalyses RNA(n) + a ribonucleoside 5'-triphosphate = RNA(n+1) + diphosphate. DNA-dependent RNA polymerase catalyzes the transcription of DNA into RNA using the four ribonucleoside triphosphates as substrates. This is DNA-directed RNA polymerase subunit beta'' from Cycas taitungensis (Prince sago).